The chain runs to 310 residues: N-acetylmuramic acid 6-phosphate etherase (310 aa).

Positions 64-227 (ITARLKSKGR…STSVMIKLGK (164 aa)) constitute an SIS domain. Residue Glu92 is the Proton donor of the active site. Glu123 is an active-site residue.

It belongs to the GCKR-like family. MurNAc-6-P etherase subfamily. In terms of assembly, homodimer.

The enzyme catalyses N-acetyl-D-muramate 6-phosphate + H2O = N-acetyl-D-glucosamine 6-phosphate + (R)-lactate. The protein operates within amino-sugar metabolism; N-acetylmuramate degradation. In terms of biological role, specifically catalyzes the cleavage of the D-lactyl ether substituent of MurNAc 6-phosphate, producing GlcNAc 6-phosphate and D-lactate. This chain is N-acetylmuramic acid 6-phosphate etherase, found in Prochlorococcus marinus (strain NATL1A).